Consider the following 159-residue polypeptide: Cyclic pyranopterin monophosphate synthase (159 aa).

Substrate is bound by residues 75–77 (LCH) and 113–114 (ME). Asp128 is an active-site residue.

The protein belongs to the MoaC family. As to quaternary structure, homohexamer; trimer of dimers.

It carries out the reaction (8S)-3',8-cyclo-7,8-dihydroguanosine 5'-triphosphate = cyclic pyranopterin phosphate + diphosphate. The protein operates within cofactor biosynthesis; molybdopterin biosynthesis. Catalyzes the conversion of (8S)-3',8-cyclo-7,8-dihydroguanosine 5'-triphosphate to cyclic pyranopterin monophosphate (cPMP). The polypeptide is Cyclic pyranopterin monophosphate synthase (Cupriavidus necator (strain ATCC 17699 / DSM 428 / KCTC 22496 / NCIMB 10442 / H16 / Stanier 337) (Ralstonia eutropha)).